Here is a 202-residue protein sequence, read N- to C-terminus: Imidazoleglycerol-phosphate dehydratase (202 aa).

It belongs to the imidazoleglycerol-phosphate dehydratase family.

The protein resides in the cytoplasm. The enzyme catalyses D-erythro-1-(imidazol-4-yl)glycerol 3-phosphate = 3-(imidazol-4-yl)-2-oxopropyl phosphate + H2O. Its pathway is amino-acid biosynthesis; L-histidine biosynthesis; L-histidine from 5-phospho-alpha-D-ribose 1-diphosphate: step 6/9. The sequence is that of Imidazoleglycerol-phosphate dehydratase from Acinetobacter baumannii (strain AYE).